Here is a 216-residue protein sequence, read N- to C-terminus: Corrinoid protein DSY3155 (216 aa).

The B12-binding N-terminal domain maps to 1-90 (MIMSLLDELK…EIAKKGMSEG (90 aa)). The region spanning 93 to 216 (KGKIVLGTVE…VELANKILGK (124 aa)) is the B12-binding domain. His106 serves as a coordination point for methylcob(III)alamin.

It belongs to the methylamine corrinoid protein family.

In terms of biological role, probably harbors a corrinoid prosthetic group and acts as a methyl group carrier between MtgB and MtgA. A methyl group from glycine betaine is likely first transferred to the corrinoid prosthetic group of the enzyme by MtgB, and then transferred to tetrahydrofolate (THF) by MtgA. The methyl group may then be ultimately converted to carbon dioxide, and its oxidation would also provide reducing equivalents for anaerobic respiration. Thus, may function in the pathway that allows anaerobic methylotrophic growth of D.hafniense using glycine betaine. The chain is Corrinoid protein DSY3155 from Desulfitobacterium hafniense (strain Y51).